The following is a 586-amino-acid chain: Aspartate--tRNA ligase (586 aa).

Position 171 (E171) interacts with L-aspartate. The tract at residues 195–198 (QLFK) is aspartate. R217 provides a ligand contact to L-aspartate. Residues 217–219 (RDE) and Q226 contribute to the ATP site. H448 contributes to the L-aspartate binding site. An ATP-binding site is contributed by E482. R489 lines the L-aspartate pocket. 534–537 (GLDR) contributes to the ATP binding site.

Belongs to the class-II aminoacyl-tRNA synthetase family. Type 1 subfamily. In terms of assembly, homodimer.

Its subcellular location is the cytoplasm. It catalyses the reaction tRNA(Asp) + L-aspartate + ATP = L-aspartyl-tRNA(Asp) + AMP + diphosphate. In terms of biological role, catalyzes the attachment of L-aspartate to tRNA(Asp) in a two-step reaction: L-aspartate is first activated by ATP to form Asp-AMP and then transferred to the acceptor end of tRNA(Asp). The sequence is that of Aspartate--tRNA ligase from Buchnera aphidicola subsp. Acyrthosiphon pisum (strain 5A).